A 398-amino-acid polypeptide reads, in one-letter code: Aurofusarin biosynthesis regulatory protein aurR1 (398 aa).

A DNA-binding region (zn(2)-C6 fungal-type) is located at residues 18-45 (CDNCAKSKVRCGKEQPWCQRCERRGQVC). 2 disordered regions span residues 52–73 (RSRK…GTPP) and 275–314 (AATI…SSLI). 2 stretches are compositionally biased toward basic and acidic residues: residues 56-67 (RTLDAAHPESDQ) and 289-298 (DGKDTERSVS). Positions 299–311 (RDTNVSQDGSEPS) are enriched in polar residues.

It is found in the nucleus. Transcription factor that specifically regulates the expression of the gene cluster that mediates the biosynthesis of aurofusarin, a red mycelium pigment which is acting as a mycotoxin. This chain is Aurofusarin biosynthesis regulatory protein aurR1, found in Gibberella zeae (strain ATCC MYA-4620 / CBS 123657 / FGSC 9075 / NRRL 31084 / PH-1) (Wheat head blight fungus).